Consider the following 192-residue polypeptide: UPF0301 protein Rru_A3059 (192 aa).

The protein belongs to the UPF0301 (AlgH) family.

The sequence is that of UPF0301 protein Rru_A3059 from Rhodospirillum rubrum (strain ATCC 11170 / ATH 1.1.1 / DSM 467 / LMG 4362 / NCIMB 8255 / S1).